Here is a 171-residue protein sequence, read N- to C-terminus: Small ribosomal subunit protein uS13 (171 aa).

A compositionally biased stretch (polar residues) spans 1–11 (MAKGSANNVKV). Disordered stretches follow at residues 1–24 (MAKG…EKKE) and 144–164 (EKGK…GLSI). Basic residues predominate over residues 144 to 158 (EKGKKVRGQRTRSNG).

It belongs to the universal ribosomal protein uS13 family. Part of the 30S ribosomal subunit. Forms a loose heterodimer with protein S19. Forms two bridges to the 50S subunit in the 70S ribosome.

In terms of biological role, located at the top of the head of the 30S subunit, it contacts several helices of the 16S rRNA. In the 70S ribosome it contacts the 23S rRNA (bridge B1a) and protein L5 of the 50S subunit (bridge B1b), connecting the 2 subunits; these bridges are implicated in subunit movement. In Thermoplasma acidophilum (strain ATCC 25905 / DSM 1728 / JCM 9062 / NBRC 15155 / AMRC-C165), this protein is Small ribosomal subunit protein uS13.